A 369-amino-acid polypeptide reads, in one-letter code: S-(hydroxymethyl)glutathione dehydrogenase (369 aa).

The Zn(2+) site is built by Cys40, His62, Cys92, Cys95, Cys98, Cys106, and Cys169.

This sequence belongs to the zinc-containing alcohol dehydrogenase family. Class-III subfamily. Homodimer. It depends on Zn(2+) as a cofactor.

It is found in the cytoplasm. The enzyme catalyses S-(hydroxymethyl)glutathione + NADP(+) = S-formylglutathione + NADPH + H(+). The catalysed reaction is S-(hydroxymethyl)glutathione + NAD(+) = S-formylglutathione + NADH + H(+). It carries out the reaction a primary alcohol + NAD(+) = an aldehyde + NADH + H(+). It catalyses the reaction a secondary alcohol + NAD(+) = a ketone + NADH + H(+). The enzyme catalyses S-nitrosoglutathione + NADH + H(+) = S-(hydroxysulfenamide)glutathione + NAD(+). Its function is as follows. Has high formaldehyde dehydrogenase activity in the presence of glutathione and catalyzes the oxidation of normal alcohols in a reaction that is not GSH-dependent. In addition, hemithiolacetals other than those formed from GSH, including omega-thiol fatty acids, also are substrates. Also acts as a S-nitroso-glutathione reductase by catalyzing the NADH-dependent reduction of S-nitrosoglutathione. This chain is S-(hydroxymethyl)glutathione dehydrogenase (frmA), found in Escherichia coli (strain ATCC 8739 / DSM 1576 / NBRC 3972 / NCIMB 8545 / WDCM 00012 / Crooks).